A 506-amino-acid polypeptide reads, in one-letter code: Cobyric acid synthase (506 aa).

The GATase cobBQ-type domain maps to 260 to 453 (KVGVAAIYFP…FHGIFNEPAV (194 aa)). Cys341 functions as the Nucleophile in the catalytic mechanism. His445 is a catalytic residue.

The protein belongs to the CobB/CobQ family. CobQ subfamily.

The protein operates within cofactor biosynthesis; adenosylcobalamin biosynthesis. In terms of biological role, catalyzes amidations at positions B, D, E, and G on adenosylcobyrinic A,C-diamide. NH(2) groups are provided by glutamine, and one molecule of ATP is hydrogenolyzed for each amidation. In Chlorobium chlorochromatii (strain CaD3), this protein is Cobyric acid synthase.